Reading from the N-terminus, the 37-residue chain is Large ribosomal subunit protein bL36 (37 aa).

Belongs to the bacterial ribosomal protein bL36 family.

The protein is Large ribosomal subunit protein bL36 of Idiomarina loihiensis (strain ATCC BAA-735 / DSM 15497 / L2-TR).